Here is a 261-residue protein sequence, read N- to C-terminus: Insulin-like growth factor-binding protein-related protein 1 (261 aa).

The first 17 residues, 1–17, serve as a signal peptide directing secretion; sequence MWIPLLLVALVVPAIRC. One can recognise an IGFBP N-terminal domain in the interval 18-101; it reads ERKCGECNPE…DPPEAMCVCL (84 aa). 8 cysteine pairs are disulfide-bonded: cysteine 21/cysteine 45, cysteine 24/cysteine 47, cysteine 29/cysteine 48, cysteine 36/cysteine 51, cysteine 59/cysteine 82, cysteine 76/cysteine 98, cysteine 100/cysteine 118, and cysteine 107/cysteine 139. Residues 70 to 141 form the Kazal-like domain; that stretch reads NRGHGPCGEY…RAMHRGPCKS (72 aa). The region spanning 143 to 243 is the Ig-like C2-type domain; that stretch reads PKITSPPEEA…GESSAAARVV (101 aa). Asparagine 154 carries N-linked (GlcNAc...) asparagine glycosylation. Cysteine 164 and cysteine 227 are disulfide-bonded.

Expressed by the venom gland.

The protein localises to the secreted. This is Insulin-like growth factor-binding protein-related protein 1 from Cupiennius salei (American wandering spider).